The primary structure comprises 348 residues: 4-hydroxyphenylpyruvate dioxygenase (348 aa).

VOC domains are found at residues 11 to 141 (GFAF…ITSS) and 151 to 303 (AIDH…IFTE). Positions 154, 232, and 312 each coordinate Fe cation.

Belongs to the 4HPPD family. Fe cation is required as a cofactor.

The catalysed reaction is 3-(4-hydroxyphenyl)pyruvate + O2 = homogentisate + CO2. Functionally, catalyzes the transformation of p-hydroxyphenylpyruvate into HGA. Has hemolytic and brown pigment production activity. This chain is 4-hydroxyphenylpyruvate dioxygenase (lly), found in Legionella pneumophila (strain Corby).